We begin with the raw amino-acid sequence, 607 residues long: Glutamine--fructose-6-phosphate aminotransferase [isomerizing] (607 aa).

Catalysis depends on Cys2, which acts as the Nucleophile; for GATase activity. The region spanning 2 to 217 (CGIIGILGKR…DGDWAVLTRE (216 aa)) is the Glutamine amidotransferase type-2 domain. 2 SIS domains span residues 277 to 422 (TVRS…QRGF) and 455 to 597 (ICRN…VDQP). Lys602 acts as the For Fru-6P isomerization activity in catalysis.

In terms of assembly, homodimer.

The protein resides in the cytoplasm. The enzyme catalyses D-fructose 6-phosphate + L-glutamine = D-glucosamine 6-phosphate + L-glutamate. In terms of biological role, catalyzes the first step in hexosamine metabolism, converting fructose-6P into glucosamine-6P using glutamine as a nitrogen source. The chain is Glutamine--fructose-6-phosphate aminotransferase [isomerizing] from Bartonella henselae (strain ATCC 49882 / DSM 28221 / CCUG 30454 / Houston 1) (Rochalimaea henselae).